Reading from the N-terminus, the 519-residue chain is Threonine synthase, chloroplastic (519 aa).

Residues 1–40 (MAASCMLRSSFISPGLPQLHHQSTSKPNNGIHFFTPIKAT) constitute a chloroplast transit peptide. K196 is subject to N6-(pyridoxal phosphate)lysine. Residues 328–332 (GNLGN) and T465 each bind pyridoxal 5'-phosphate.

This sequence belongs to the threonine synthase family. In terms of assembly, homodimer. Requires pyridoxal 5'-phosphate as cofactor.

It is found in the plastid. The protein localises to the chloroplast. The enzyme catalyses O-phospho-L-homoserine + H2O = L-threonine + phosphate. The protein operates within amino-acid biosynthesis; L-threonine biosynthesis; L-threonine from L-aspartate: step 5/5. Its activity is regulated as follows. Allosterically activated by S-adenosyl-methionine (SAM). Catalyzes the gamma-elimination of phosphate from L-phosphohomoserine and the beta-addition of water to produce L-threonine. In Solanum tuberosum (Potato), this protein is Threonine synthase, chloroplastic.